Reading from the N-terminus, the 354-residue chain is Uroporphyrinogen decarboxylase (354 aa).

Substrate is bound by residues 27 to 31 (RQAGR), Asp-77, Tyr-154, Thr-209, and His-327.

Belongs to the uroporphyrinogen decarboxylase family. Homodimer.

Its subcellular location is the cytoplasm. The enzyme catalyses uroporphyrinogen III + 4 H(+) = coproporphyrinogen III + 4 CO2. It functions in the pathway porphyrin-containing compound metabolism; protoporphyrin-IX biosynthesis; coproporphyrinogen-III from 5-aminolevulinate: step 4/4. Functionally, catalyzes the decarboxylation of four acetate groups of uroporphyrinogen-III to yield coproporphyrinogen-III. This is Uroporphyrinogen decarboxylase from Escherichia fergusonii (strain ATCC 35469 / DSM 13698 / CCUG 18766 / IAM 14443 / JCM 21226 / LMG 7866 / NBRC 102419 / NCTC 12128 / CDC 0568-73).